The sequence spans 186 residues: Peptide deformylase (186 aa).

2 residues coordinate Fe cation: cysteine 113 and histidine 156. Glutamate 157 is a catalytic residue. A Fe cation-binding site is contributed by histidine 160.

Belongs to the polypeptide deformylase family. Fe(2+) is required as a cofactor.

It carries out the reaction N-terminal N-formyl-L-methionyl-[peptide] + H2O = N-terminal L-methionyl-[peptide] + formate. Removes the formyl group from the N-terminal Met of newly synthesized proteins. Requires at least a dipeptide for an efficient rate of reaction. N-terminal L-methionine is a prerequisite for activity but the enzyme has broad specificity at other positions. The sequence is that of Peptide deformylase from Ligilactobacillus salivarius (strain UCC118) (Lactobacillus salivarius).